The primary structure comprises 412 residues: MQYEKVKPPENGEKIRYENGKLIVPDNPIIPYFEGDGIGKDVVPAAIRVLDAAADKIGKEVVWFQVYAGEDAYKLYGNYLPDDTLNAIKEFRVALKGPLTTPVGGGYRSLNVTIRQVLDLYANVRPVYYLKGVPSPIKHPEKVNFVIFRENTEDVYAGIEWPRGSEEALKLIRFLKNEFGVTIREDSGIGIKPISEFATKRLVRMAIRYAIENNRKSVTLVHKGNIMKYTEGAFRDWGYEVAKQEFGEYCITEDELWDKYGGKQPEGKIVVKDRIADNMFQQILTRTDEYDVIALPNLNGDYLSDAAAALIGGLGIAPGSNIGDGIGVFEPVHGSAPKYAGQNKVNPTAEILTGALMFEYIGWKDASEMIKKAVEMTISSGIVTYDIHRHMGGTKVGTREFAEAVVENLQSL.

An NADP(+)-binding site is contributed by Thr100. The D-threo-isocitrate site is built by Ser109, Asn111, Arg115, Arg125, and Arg149. Asp301 lines the Mg(2+) pocket. NADP(+)-binding positions include 333–339 (HGSAPKY), Asn346, Tyr385, and Arg389.

It belongs to the isocitrate and isopropylmalate dehydrogenases family. Homodimer. Requires Mg(2+) as cofactor. The cofactor is Mn(2+).

The enzyme catalyses D-threo-isocitrate + NADP(+) = 2-oxoglutarate + CO2 + NADPH. Its function is as follows. Catalyzes the oxidative decarboxylation of isocitrate to 2-oxoglutarate and carbon dioxide with the concomitant reduction of NADP(+). NAD(+) can replace NADP(+) with low efficiency. In Archaeoglobus fulgidus (strain ATCC 49558 / DSM 4304 / JCM 9628 / NBRC 100126 / VC-16), this protein is Isocitrate dehydrogenase [NADP].